The primary structure comprises 75 residues: Caerin-1.1 (75 aa).

An N-terminal signal peptide occupies residues 1–22 (MASLKKSLFLVLLLGFVSVSIC). Positions 23-49 (EEEKRQEDEDEHEEEGESQEEGSEEKR) are excised as a propeptide. Positions 24–49 (EEKRQEDEDEHEEEGESQEEGSEEKR) are disordered. The span at 30-45 (DEDEHEEEGESQEEGS) shows a compositional bias: acidic residues. Leucine 74 is modified (leucine amide).

Belongs to the frog skin active peptide (FSAP) family. Caerin subfamily. Post-translationally, the major product is Caerin-1.1; in addition, different peptides are produced that are missing some amino acid residues at the N-terminus or C-terminus. Caerin-1.1.1 and Caerin-1.1.4 are inactive. In terms of tissue distribution, expressed by the skin parotoid and/or rostral glands.

The protein resides in the secreted. Functionally, antimicrobial peptide with antibacterial and antiviral activities. Adopts an alpha helical conformation which can disrupt bacterial membranes. Inhibits the formation of NO by neuronal nitric oxide synthase (nNOS) at micromolar concentrations. Acts by a non-competitive mechanism, probably by binding to calcium/calmodulin and as a consequence blocking calmodulin attachment to nNOS. Is inactive. This chain is Caerin-1.1, found in Ranoidea caerulea (Green tree frog).